Reading from the N-terminus, the 501-residue chain is Tetrachloroethene reductive dehalogenase (501 aa).

Positions 1-37 form a signal peptide, tat-type signal; that stretch reads MEKKKKPELSRRDFGKLIIGGGAAATIAPFGVPGANA. Corrinoid-binding positions include alanine 74, tyrosine 207, 309-314, 329-332, and 341-343; these read NGVGQS, MGAC, and VRL. Residues 356–386 form the 4Fe-4S ferredoxin-type 1 domain; sequence KPIDFGVTEFCETCKKCARECPSKAITEGPR. Positions 366, 369, 372, and 376 each coordinate [4Fe-4S] cluster. 394-401 contributes to the corrinoid binding site; the sequence is HNQSGKLQ. Cysteine 409 serves as a coordination point for [4Fe-4S] cluster. Corrinoid is bound at residue tyrosine 419. Residues cysteine 420, cysteine 423, and cysteine 427 each coordinate [4Fe-4S] cluster. A 4Fe-4S ferredoxin-type 2 domain is found at 420–439; that stretch reads CGVCVAVCPFTKGNIWIHDG.

This sequence belongs to the PceA family. As to quaternary structure, monomer. [4Fe-4S] cluster is required as a cofactor. The cofactor is corrinoid. Predicted to be exported by the Tat system. The position of the signal peptide cleavage has not been experimentally proven.

The protein resides in the cytoplasm. It localises to the cell inner membrane. It carries out the reaction trichloroethene + chloride + A + H(+) = tetrachloroethene + AH2. It catalyses the reaction trichloroethene + AH2 = (Z)-1,2-dichloroethene + chloride + A + H(+). Both the processed and unprocessed enzymes are catalytically active. PCE-dependent growth and PceA activity are inhibited in the presence of high concentrations of 5,6-dimethylbenzimidazole (DMB), probably due to the formation a DMB-containing nor-B12 cofactor. Dechlorination of PCE is stimulated by ammonium ions. Activity is inhibited by chlorinated methanes. Functionally, catalyzes the reductive dechlorination of tetrachloroethene (PCE) to trichloroethene (TCE) and of trichloroethene to cis-1,2-dichloroethene (DCE). In addition, trans-1,3-dichloropropene, 1,1,3-trichloropropene and 2,3-dichloropropene are reduced to a mixture of mono-chloropropenes, 1,1-dichloropropene, and 2-chloropropene, respectively. Is also able to convert brominated phenols such as 4-bromophenol (4-BP), 2,4-dibromophenol (2,4-DBP) and 2,4,6-tribromophenol (2,4,6-TBP). Utilizes formate or pyruvate as electron donors. Titanium(III) citrate could also serve as electron donor. Reduced methyl viologen can act as the artificial electron donor. The chain is Tetrachloroethene reductive dehalogenase from Sulfurospirillum multivorans (Dehalospirillum multivorans).